We begin with the raw amino-acid sequence, 382 residues long: Plasmid replication initiator protein TrfA (382 aa).

The toxic in E.coli strain K12 / DH5-alpha; may be membrane-associated stretch occupies residues 1–163; sequence MNRTFDRKAY…TARSALFTTR (163 aa). Residues 246-265 constitute a DNA-binding region (H-T-H motif); sequence SRLQATAMGFTSDRVGHLES. The tract at residues 286 to 297 is hydrophobic region (HR); required for membrane association; it reads VLIDEEIVVLFA.

Forms a dimer in solution, binds DNA as a monomer. Both mononer and dimer of the short form interact with Hda (Dp).

It localises to the cell inner membrane. Its function is as follows. Required for initiation of plasmid DNA replication, along with host-derived DnaA and other host proteins. Both forms of the protein are capable of initiating plasmid replication in a number of Gram-negative bacteria. Binds to 8 17-base pair repeat sequences (iterons) in the RK2 minimal replication origin (oriV), opening the origin of replication. oriV opening does not absolutely require the presence of nucleotides; formation of open complex is somewhat enhanced by ATP or ATP gamma S, while DnaA or HU is required for full opening. Also involved in plasmid copy number control, promoting intermolecular coupling of protein bound iterons at oriV, which inhibits replication initiation. The sequence is that of Plasmid replication initiator protein TrfA (trfA) from Escherichia coli.